The primary structure comprises 868 residues: Monofunctional pimaradiene synthase (868 aa).

5 residues coordinate Mg(2+): aspartate 620, aspartate 624, asparagine 764, threonine 768, and glutamate 772.

Belongs to the terpene synthase family. Tpsd subfamily. Mg(2+) serves as cofactor.

The enzyme catalyses (+)-copalyl diphosphate = (-)-pimara-8(14),15-diene + diphosphate. It functions in the pathway terpene metabolism; oleoresin biosynthesis. Functionally, involved in defensive oleoresin formation in conifers in response to insect attack or other injury. Involved in diterpene (C20) olefins biosynthesis. Monofunctional enzyme lacking the DXDD motif in the class II active site relevant for the cyclization of geranylgeranyl diphosphate (GGPP). Requires (+)-copalyl diphosphate ((+)-CPP) as substrate, but no activity with GGPP or ent-CPP. Pimaradiene is the major products of the enzyme. The protein is Monofunctional pimaradiene synthase of Pinus contorta (Shore pine).